Reading from the N-terminus, the 178-residue chain is Peptide deformylase (178 aa).

Fe cation contacts are provided by Cys92 and His134. Residue Glu135 is part of the active site. Position 138 (His138) interacts with Fe cation.

It belongs to the polypeptide deformylase family. It depends on Fe(2+) as a cofactor.

The catalysed reaction is N-terminal N-formyl-L-methionyl-[peptide] + H2O = N-terminal L-methionyl-[peptide] + formate. Functionally, removes the formyl group from the N-terminal Met of newly synthesized proteins. Requires at least a dipeptide for an efficient rate of reaction. N-terminal L-methionine is a prerequisite for activity but the enzyme has broad specificity at other positions. This Alkalilimnicola ehrlichii (strain ATCC BAA-1101 / DSM 17681 / MLHE-1) protein is Peptide deformylase.